Here is a 448-residue protein sequence, read N- to C-terminus: Na(+)-translocating NADH-quinone reductase subunit A (448 aa).

It belongs to the NqrA family. As to quaternary structure, composed of six subunits; NqrA, NqrB, NqrC, NqrD, NqrE and NqrF.

It carries out the reaction a ubiquinone + n Na(+)(in) + NADH + H(+) = a ubiquinol + n Na(+)(out) + NAD(+). Its function is as follows. NQR complex catalyzes the reduction of ubiquinone-1 to ubiquinol by two successive reactions, coupled with the transport of Na(+) ions from the cytoplasm to the periplasm. NqrA to NqrE are probably involved in the second step, the conversion of ubisemiquinone to ubiquinol. The chain is Na(+)-translocating NADH-quinone reductase subunit A from Alcanivorax borkumensis (strain ATCC 700651 / DSM 11573 / NCIMB 13689 / SK2).